Here is a 267-residue protein sequence, read N- to C-terminus: Putative [LysW]-aminoadipate/[LysW]-glutamate kinase (267 aa).

Residues 37-38, arginine 64, and asparagine 169 contribute to the substrate site; that span reads GG.

It belongs to the acetylglutamate kinase family. LysZ subfamily.

It localises to the cytoplasm. It catalyses the reaction [amino-group carrier protein]-C-terminal-N-(1,4-dicarboxybutan-1-yl)-L-glutamine + ATP = [amino-group carrier protein]-C-terminal-N-(1-carboxy-5-phosphooxy-5-oxopentan-1-yl)-L-glutamine + ADP. It carries out the reaction [amino-group carrier protein]-C-terminal-gamma-(L-glutamyl)-L-glutamate + ATP = [amino-group carrier protein]-C-terminal-gamma-(5-phospho-L-glutamyl)-L-glutamate + ADP. The protein operates within amino-acid biosynthesis; L-lysine biosynthesis via AAA pathway; L-lysine from L-alpha-aminoadipate (Thermus route): step 2/5. It participates in amino-acid biosynthesis; L-arginine biosynthesis. In terms of biological role, involved in both the arginine and lysine biosynthetic pathways. Phosphorylates the LysW-bound precursors glutamate (for arginine biosynthesis), respectively alpha-aminoadipate (for lysine biosynthesis). The chain is Putative [LysW]-aminoadipate/[LysW]-glutamate kinase from Nitrosopumilus maritimus (strain SCM1).